Consider the following 276-residue polypeptide: Large ribosomal subunit protein uL2 (276 aa).

The tract at residues Thr-219–Lys-268 is disordered.

Belongs to the universal ribosomal protein uL2 family. Part of the 50S ribosomal subunit. Forms a bridge to the 30S subunit in the 70S ribosome.

Its function is as follows. One of the primary rRNA binding proteins. Required for association of the 30S and 50S subunits to form the 70S ribosome, for tRNA binding and peptide bond formation. It has been suggested to have peptidyltransferase activity; this is somewhat controversial. Makes several contacts with the 16S rRNA in the 70S ribosome. In Lactococcus lactis subsp. lactis (strain IL1403) (Streptococcus lactis), this protein is Large ribosomal subunit protein uL2.